Here is a 127-residue protein sequence, read N- to C-terminus: Large ribosomal subunit protein bL12 (127 aa).

Belongs to the bacterial ribosomal protein bL12 family. In terms of assembly, homodimer. Part of the ribosomal stalk of the 50S ribosomal subunit. Forms a multimeric L10(L12)X complex, where L10 forms an elongated spine to which 2 to 4 L12 dimers bind in a sequential fashion. Binds GTP-bound translation factors.

In terms of biological role, forms part of the ribosomal stalk which helps the ribosome interact with GTP-bound translation factors. Is thus essential for accurate translation. This is Large ribosomal subunit protein bL12 from Rhizobium etli (strain CIAT 652).